The sequence spans 96 residues: UPF0235 protein YggU (96 aa).

Belongs to the UPF0235 family.

This chain is UPF0235 protein YggU, found in Salmonella agona (strain SL483).